The sequence spans 486 residues: H2.0-like homeobox protein (486 aa).

2 disordered regions span residues 83–173 (ASFQ…SSKD) and 330–486 (KWRH…LGGL). The segment covering 125–135 (QQQQQQQQPQQ) has biased composition (low complexity). Residues 276-335 (RSWSRAVFSNLQRKGLEKRFEIQKYVTKPDRKQLAAMLGLTDAQVKVWFQNRRMKWRHSK) constitute a DNA-binding region (homeobox). Composition is skewed to basic and acidic residues over residues 334 to 349 (SKEAQAQKDKDKEAGE) and 363 to 372 (EERSPSRSEG). Residues 373-383 (EAESESSDPES) are compositionally biased toward acidic residues. The segment covering 390-401 (DTERTEGTERSL) has biased composition (basic and acidic residues). Positions 409–420 (ASAAGALLAASS) are enriched in low complexity. The segment covering 421 to 440 (GGSGGSGGGGGGGFNFGGLS) has biased composition (gly residues). Residues 441-474 (SGSTTSAGSSGSHSSGGASELLPAPQPSLSSAPK) show a composition bias toward low complexity. Residues 475–486 (SPEPVPAPLGGL) are compositionally biased toward pro residues.

This sequence belongs to the H2.0 homeobox family.

It is found in the nucleus. Its function is as follows. Transcription factor required for TBX21/T-bet-dependent maturation of Th1 cells as well as maintenance of Th1-specific gene expression. Involved in embryogenesis and hematopoiesis. This is H2.0-like homeobox protein (HLX) from Bos taurus (Bovine).